Here is a 247-residue protein sequence, read N- to C-terminus: MSGLRPGTQVDPEIELFVKAGSDGESIGNCPFCQRLFMILWLKGVKFNVTTVDMTRKPEELKDLAPGTNPPFLVYNKELKTDFIKIEEFLEQTLAPPRYPHLSPKYKESFDVGCNLFAKFSAYIKNTQKEANKNFEKSLLKEFKRLDDYLNTPLLDEIDPDSAEEPPVSRRLFLDGDQLTLADCSLLPKLNIIKVAAKKYRDFDIPAEFSGVWRYLHNAYAREEFTHTCPEDKEIENTYANVAKQKS.

Positions 1-94 (MSGLRPGTQV…KIEEFLEQTL (94 aa)) are N-terminal. The tract at residues 1-96 (MSGLRPGTQV…EEFLEQTLAP (96 aa)) is required for insertion into the membrane. Position 25 (E25) interacts with glutathione. Positions 30–33 (CPFC) match the G-site motif. C30 and C33 are joined by a disulfide. A helical membrane pass occupies residues 32-52 (FCQRLFMILWLKGVKFNVTTV). A GST C-terminal domain is found at 76-239 (NKELKTDFIK…PEDKEIENTY (164 aa)). The joint loop stretch occupies residues 95–106 (APPRYPHLSPKY). Residues 107–247 (KESFDVGCNL…TYANVAKQKS (141 aa)) form a C-terminal region. Residues 151–171 (NTPLLDEIDPDSAEEPPVSRR) form a foot loop region. H227 lines the glutathione pocket.

The protein belongs to the chloride channel CLIC family. Monomer. Interacts with TRAPPC2 and RYR2. As to expression, expressed in adult and fetal brain, heart, skeletal muscle, liver, lung, and spleen. Detected in adult stomach and testis. Expressed in fetal thymus and kidney.

It localises to the cytoplasm. The protein resides in the membrane. The enzyme catalyses chloride(in) = chloride(out). The catalysed reaction is tert-butyl hydroperoxide + 2 glutathione = tert-butanol + glutathione disulfide + H2O. It carries out the reaction cumene hydroperoxide + 2 glutathione = 2-phenylpropan-2-ol + glutathione disulfide + H2O. The channel conductance is regulated by pH. Functionally, in the soluble state, catalyzes glutaredoxin-like thiol disulfide exchange reactions with reduced glutathione as electron donor. Displays weak glutathione peroxidase activity. Can insert into membranes and form chloride ion channels. Membrane insertion seems to be redox-regulated and may occur only under oxidizing conditions. Modulates the activity of RYR2 and inhibits calcium influx. The polypeptide is Chloride intracellular channel protein 2 (Homo sapiens (Human)).